A 434-amino-acid chain; its full sequence is Chaperone SurA (434 aa).

The signal sequence occupies residues 1–22 (MKPSKHLIFALFALAISQPTMA). PpiC domains follow at residues 173 to 274 (DVEY…KIMD) and 283 to 383 (IEEV…QLEE).

It localises to the periplasm. It catalyses the reaction [protein]-peptidylproline (omega=180) = [protein]-peptidylproline (omega=0). Its function is as follows. Chaperone involved in the correct folding and assembly of outer membrane proteins. Recognizes specific patterns of aromatic residues and the orientation of their side chains, which are found more frequently in integral outer membrane proteins. May act in both early periplasmic and late outer membrane-associated steps of protein maturation. The chain is Chaperone SurA from Shewanella sp. (strain MR-4).